A 384-amino-acid chain; its full sequence is Histidinol-phosphate aminotransferase 1 (384 aa).

Lys233 bears the N6-(pyridoxal phosphate)lysine mark.

The protein belongs to the class-II pyridoxal-phosphate-dependent aminotransferase family. Histidinol-phosphate aminotransferase subfamily. Homodimer. Requires pyridoxal 5'-phosphate as cofactor.

It catalyses the reaction L-histidinol phosphate + 2-oxoglutarate = 3-(imidazol-4-yl)-2-oxopropyl phosphate + L-glutamate. Its pathway is amino-acid biosynthesis; L-histidine biosynthesis; L-histidine from 5-phospho-alpha-D-ribose 1-diphosphate: step 7/9. The polypeptide is Histidinol-phosphate aminotransferase 1 (Thiobacillus denitrificans (strain ATCC 25259 / T1)).